Here is a 247-residue protein sequence, read N- to C-terminus: uncharacterized protein (247 aa).

2 helical membrane-spanning segments follow: residues 11–31 (LIAP…IYCV) and 39–59 (FIAI…TGLL).

The protein resides in the cell membrane. This is an uncharacterized protein from Haemophilus influenzae (strain ATCC 51907 / DSM 11121 / KW20 / Rd).